Consider the following 244-residue polypeptide: Dirigent protein 18 (244 aa).

Positions 1-25 (MMKQSPFSLLTSIFLIAALFTATTA) are cleaved as a signal peptide.

It belongs to the plant dirigent protein family. As to quaternary structure, homodimer.

It localises to the secreted. Its subcellular location is the extracellular space. The protein resides in the apoplast. Functionally, dirigent proteins impart stereoselectivity on the phenoxy radical-coupling reaction, yielding optically active lignans from two molecules of coniferyl alcohol in the biosynthesis of lignans, flavonolignans, and alkaloids and thus plays a central role in plant secondary metabolism. The polypeptide is Dirigent protein 18 (DIR18) (Arabidopsis thaliana (Mouse-ear cress)).